Here is a 703-residue protein sequence, read N- to C-terminus: Antigen peptide transporter 2 (703 aa).

Topologically, residues 1 to 6 (MALSHP) are lumenal. The chain crosses the membrane as a helical span at residues 7 to 27 (RPWASLLLVDLALLGLLQSSL). Over 28 to 56 (GTLLPPGLPGLWLEGTLRLGVLWGLLKVG) the chain is Cytoplasmic. The chain crosses the membrane as a helical span at residues 57 to 77 (GLLRLVGTFLPLLCLTNPLFF). Topologically, residues 78 to 98 (SLRALVGSTMSTSVVRVASAS) are lumenal. A helical membrane pass occupies residues 99-119 (WGWLLADYGAVALSLAVWAVL). Topologically, residues 120-148 (SPAGAQEKEPGQENNRALMIRLLRLSKPD) are cytoplasmic. Residues 149-169 (LPFLIVAFIFLAMAVWWEMFI) form a helical membrane-spanning segment. An ABC transmembrane type-1 domain is found at 152–435 (LIVAFIFLAM…LVYMYGDMLS (284 aa)). The Lumenal portion of the chain corresponds to 170–187 (PHYSGRVIDILGGDFDPD). Residues 188–208 (AFASAIFFMCLFSVGSSLSAG) form a helical membrane-spanning segment. Residues 209-266 (CRGGSFLFAESRINLRIREQLFSSLLRQDLAFFQETKTGELNSRLSSDTSLMSQWLSL) are Cytoplasmic-facing. The helical transmembrane segment at 267–287 (NANILLRSLVKVVGLYYFMLQ) threads the bilayer. The Lumenal portion of the chain corresponds to 288-293 (VSPRLT). The helical transmembrane segment at 294–314 (FLSLLDLPLTIAAEKVYNPRH) threads the bilayer. The part of the peptide-binding site stretch occupies residues 301–389 (PLTIAAEKVY…QRVMALGMQV (89 aa)). The Cytoplasmic portion of the chain corresponds to 315–374 (QAVLKEIQDAVAKAGQVVREAVGGLQTVRSFGAEEQEVRRYKEALERCRQLWWRRDLEKS). The chain crosses the membrane as a helical span at residues 375-395 (LYLVIQRVMALGMQVLILNVG). The Lumenal segment spans residues 396-408 (VQQILAGEVTRGG). A helical membrane pass occupies residues 409–429 (LLSFLLYQEEVGHHVQNLVYM). The tract at residues 414 to 433 (LYQEEVGHHVQNLVYMYGDM) is part of the peptide-binding site. The Cytoplasmic segment spans residues 430-703 (YGDMLSNVGA…AHLVQQRLEA (274 aa)). An ABC transporter domain is found at 468-702 (VEFQDVSFSY…YAHLVQQRLE (235 aa)). Residue 503–510 (GPNGSGKS) participates in ATP binding.

This sequence belongs to the ABC transporter superfamily. ABCB family. MHC peptide exporter (TC 3.A.1.209) subfamily. Heterodimer of TAP1 and TAP2 (TAP1-TAP2). A component of the peptide loading complex (PLC), interacts via TAPBP with MHCI heterodimer; this interaction mediates peptide-MHCI assembly. Mg(2+) is required as a cofactor.

The protein resides in the endoplasmic reticulum membrane. The enzyme catalyses a peptide antigen(in) + ATP + H2O = a peptide antigen(out) + ADP + phosphate + H(+). Its function is as follows. ABC transporter associated with antigen processing. In complex with TAP1 mediates unidirectional translocation of peptide antigens from cytosol to endoplasmic reticulum (ER) for loading onto MHC class I (MHCI) molecules. Uses the chemical energy of ATP to export peptides against the concentration gradient. During the transport cycle alternates between 'inward-facing' state with peptide binding site facing the cytosol to 'outward-facing' state with peptide binding site facing the ER lumen. Peptide antigen binding to ATP-loaded TAP1-TAP2 induces a switch to hydrolysis-competent 'outward-facing' conformation ready for peptide loading onto nascent MHCI molecules. Subsequently ATP hydrolysis resets the transporter to the 'inward facing' state for a new cycle. As a component of the peptide loading complex (PLC), acts as a molecular scaffold essential for peptide-MHCI assembly and antigen presentation. The sequence is that of Antigen peptide transporter 2 (Tap2) from Rattus norvegicus (Rat).